A 341-amino-acid polypeptide reads, in one-letter code: MATIKDVAKRANVSTTTVSHVINKTRFVAEETRNAVWAAIKELHYSPSAVARSLKVNHTKSIGLLATSSEAAYFAEIIEAVEKNCFQKGYTLILGNAWNNLEKQRAYLSMMAQKRVDGLLVMCSEYPEPLLAMLEEYRHIPMVVMDWGEAKADFTDAVIDNAFEGGYMAGRYLIERGHREIGVIPGPLERNTGAGRLAGFMKAMEEAMIKVPESWIVQGDFEPESGYRAMQQILSQPHRPTAVFCGGDIMAMGALCAADEMGLRVPQDVSLIGYDNVRNARYFTPALTTIHQPKDSLGETAFNMLLDRIVNKREEPQSIEVHPRLIERRSVADGPFRDYRR.

The HTH lacI-type domain occupies 2–56; it reads ATIKDVAKRANVSTTTVSHVINKTRFVAEETRNAVWAAIKELHYSPSAVARSLKV. Residues 4–23 constitute a DNA-binding region (H-T-H motif); that stretch reads IKDVAKRANVSTTTVSHVIN. Residues 48–56 mediate DNA binding; sequence SAVARSLKV. Tyr-73, Arg-190, Thr-192, Phe-221, and Asp-275 together coordinate hypoxanthine.

Homodimer.

Its pathway is purine metabolism; purine nucleotide biosynthesis [regulation]. Its function is as follows. Is the main repressor of the genes involved in the de novo synthesis of purine nucleotides, regulating purB, purC, purEK, purF, purHD, purL, purMN and guaBA expression. In addition, it participates in the regulation or coregulation of genes involved in de novo pyrimidine nucleotide biosynthesis, salvage and uptake (pyrC, pyrD, carAB and codBA), and of several genes encoding enzymes necessary for nucleotide and polyamine biosynthesis (prsA, glyA, gcvTHP, speA, glnB). Binds to a 16-bp palindromic sequence located within the promoter region of pur regulon genes. The consensus binding sequence is 5'-ACGCAAACGTTTTCNT-3'. PurR is allosterically activated to bind its cognate DNA by binding the purine corepressors, hypoxanthine or guanine, thereby effecting transcription repression. This is HTH-type transcriptional repressor PurR (purR) from Escherichia coli (strain K12).